A 515-amino-acid polypeptide reads, in one-letter code: Maturase K (515 aa).

The protein belongs to the intron maturase 2 family. MatK subfamily.

It localises to the plastid. It is found in the chloroplast. Functionally, usually encoded in the trnK tRNA gene intron. Probably assists in splicing its own and other chloroplast group II introns. The chain is Maturase K from Zingiber officinale (Ginger).